We begin with the raw amino-acid sequence, 213 residues long: Pyridoxine/pyridoxamine 5'-phosphate oxidase (213 aa).

Residues 9 to 12 (RKDY) and Lys67 each bind substrate. FMN is bound by residues 62–67 (RIVLLK), 77–78 (FT), Arg83, Lys84, and Gln106. 3 residues coordinate substrate: Tyr124, Arg128, and Ser132. Residues 141-142 (QS) and Trp186 contribute to the FMN site. 192–194 (RLH) is a substrate binding site. Arg196 is an FMN binding site.

This sequence belongs to the pyridoxamine 5'-phosphate oxidase family. As to quaternary structure, homodimer. The cofactor is FMN.

The catalysed reaction is pyridoxamine 5'-phosphate + O2 + H2O = pyridoxal 5'-phosphate + H2O2 + NH4(+). The enzyme catalyses pyridoxine 5'-phosphate + O2 = pyridoxal 5'-phosphate + H2O2. Its pathway is cofactor metabolism; pyridoxal 5'-phosphate salvage; pyridoxal 5'-phosphate from pyridoxamine 5'-phosphate: step 1/1. It participates in cofactor metabolism; pyridoxal 5'-phosphate salvage; pyridoxal 5'-phosphate from pyridoxine 5'-phosphate: step 1/1. Catalyzes the oxidation of either pyridoxine 5'-phosphate (PNP) or pyridoxamine 5'-phosphate (PMP) into pyridoxal 5'-phosphate (PLP). The sequence is that of Pyridoxine/pyridoxamine 5'-phosphate oxidase from Cyanothece sp. (strain PCC 7425 / ATCC 29141).